The following is a 742-amino-acid chain: Feeding circuit activating peptides (742 aa).

Positions 1–22 (MTFAASFRALLCVLFCAALVHC) are cleaved as a signal peptide. Positions 23 to 98 (KTRTKRYVPH…YGALADRDVD (76 aa)) are excised as a propeptide. A propeptide spans 117–131 (GSLDAIPQDTDASSD) (connecting peptide). Propeptides lie at residues 164-168 (GSGAE), 202-220 (RGTG…PWGS), 236-253 (DTEL…TEVN), 271-275 (SGEAG), 293-297 (ADDQG), 315-321 (FDNSAGE), 339-341 (AGD), 359-366 (FDNDISGQ), 384-388 (SDQDN), 406-410 (ADDDG), 428-432 (ADEDD), 450-454 (GDEDD), 472-476 (ADEDD), 494-498 (SDEDD), 516-520 (SDEDD), 538-542 (ADEDD), 560-564 (NSPGL), 582-592 (NNEYYSGAENE), 610-614 (DQPGE), and 647-742 (NSAD…AGQM).

Expressed in pleural, pedal, abdominal, buccal and cerebral ganglia.

The protein resides in the secreted. Functionally, initiates organized rhythmic motor output of feeding circuit. In Aplysia californica (California sea hare), this protein is Feeding circuit activating peptides.